The chain runs to 212 residues: Uridine kinase (212 aa).

13–20 is a binding site for ATP; sequence GGSGSGKT.

The protein belongs to the uridine kinase family.

It localises to the cytoplasm. It catalyses the reaction uridine + ATP = UMP + ADP + H(+). It carries out the reaction cytidine + ATP = CMP + ADP + H(+). The protein operates within pyrimidine metabolism; CTP biosynthesis via salvage pathway; CTP from cytidine: step 1/3. Its pathway is pyrimidine metabolism; UMP biosynthesis via salvage pathway; UMP from uridine: step 1/1. The protein is Uridine kinase of Bacillus cytotoxicus (strain DSM 22905 / CIP 110041 / 391-98 / NVH 391-98).